The chain runs to 38 residues: Beta-galactosidase (38 aa).

Belongs to the glycosyl hydrolase 35 family. As to quaternary structure, heterodimer of a large and a small subunit. The small subunit is N-glycosylated.

It catalyses the reaction Hydrolysis of terminal non-reducing beta-D-galactose residues in beta-D-galactosides.. Involved in cell wall degradation. Degrades polysaccharides containing beta-(1--&gt;4)-linked galactans, acting as an exo-(1--&gt;4)-beta-D-galactanase. In Hordeum vulgare (Barley), this protein is Beta-galactosidase.